The chain runs to 362 residues: Molybdenum import ATP-binding protein ModC (362 aa).

One can recognise an ABC transporter domain in the interval 2–236 (ASPIEVRLQM…LDLPLAMGSD (235 aa)). 34 to 41 (GPSGSGKT) is an ATP binding site. Positions 297–362 (QSSILNRLPV…AQIKAVAVLA (66 aa)) constitute a Mop domain.

This sequence belongs to the ABC transporter superfamily. Molybdate importer (TC 3.A.1.8) family. As to quaternary structure, the complex is composed of two ATP-binding proteins (ModC), two transmembrane proteins (ModB) and a solute-binding protein (ModA).

The protein localises to the cell inner membrane. The catalysed reaction is molybdate(out) + ATP + H2O = molybdate(in) + ADP + phosphate + H(+). Its function is as follows. Part of the ABC transporter complex ModABC involved in molybdenum import. Responsible for energy coupling to the transport system. This Pseudomonas syringae pv. syringae (strain B728a) protein is Molybdenum import ATP-binding protein ModC.